The chain runs to 215 residues: Ribonuclease T (215 aa).

In terms of domain architecture, Exonuclease spans 20–194 (VVIDVETAGF…YDTERTAVLF (175 aa)). Mg(2+)-binding residues include Asp23, Glu25, His181, and Asp186. Residue His181 is the Proton donor/acceptor of the active site.

This sequence belongs to the RNase T family. In terms of assembly, homodimer. Mg(2+) is required as a cofactor.

Trims short 3' overhangs of a variety of RNA species, leaving a one or two nucleotide 3' overhang. Responsible for the end-turnover of tRNA: specifically removes the terminal AMP residue from uncharged tRNA (tRNA-C-C-A). Also appears to be involved in tRNA biosynthesis. The protein is Ribonuclease T of Shigella dysenteriae serotype 1 (strain Sd197).